The primary structure comprises 280 residues: Pantothenate synthetase (280 aa).

31 to 38 (MGNLHAGH) provides a ligand contact to ATP. His38 functions as the Proton donor in the catalytic mechanism. Position 62 (Gln62) interacts with (R)-pantoate. Gln62 lines the beta-alanine pocket. 150–153 (GKKD) contacts ATP. (R)-pantoate is bound at residue Gln156. ATP contacts are provided by residues Val179 and 187-190 (MSSR).

This sequence belongs to the pantothenate synthetase family. In terms of assembly, homodimer.

It is found in the cytoplasm. It catalyses the reaction (R)-pantoate + beta-alanine + ATP = (R)-pantothenate + AMP + diphosphate + H(+). The protein operates within cofactor biosynthesis; (R)-pantothenate biosynthesis; (R)-pantothenate from (R)-pantoate and beta-alanine: step 1/1. Functionally, catalyzes the condensation of pantoate with beta-alanine in an ATP-dependent reaction via a pantoyl-adenylate intermediate. This chain is Pantothenate synthetase, found in Xanthomonas euvesicatoria pv. vesicatoria (strain 85-10) (Xanthomonas campestris pv. vesicatoria).